A 190-amino-acid polypeptide reads, in one-letter code: Elongation factor P-like protein (190 aa).

Belongs to the elongation factor P family.

The polypeptide is Elongation factor P-like protein (Serratia proteamaculans (strain 568)).